We begin with the raw amino-acid sequence, 210 residues long: Glycerol-3-phosphate acyltransferase (210 aa).

6 helical membrane-spanning segments follow: residues 8-28 (LILL…LLLT), 56-76 (GLAA…VLIA), 87-107 (TMAV…WLGF), 119-139 (TIWV…LLVA), 144-164 (ISSA…VLLS), and 165-185 (GRPL…LIWA).

The protein belongs to the PlsY family. In terms of assembly, probably interacts with PlsX.

It localises to the cell inner membrane. It carries out the reaction an acyl phosphate + sn-glycerol 3-phosphate = a 1-acyl-sn-glycero-3-phosphate + phosphate. Its pathway is lipid metabolism; phospholipid metabolism. Catalyzes the transfer of an acyl group from acyl-phosphate (acyl-PO(4)) to glycerol-3-phosphate (G3P) to form lysophosphatidic acid (LPA). This enzyme utilizes acyl-phosphate as fatty acyl donor, but not acyl-CoA or acyl-ACP. In Gluconobacter oxydans (strain 621H) (Gluconobacter suboxydans), this protein is Glycerol-3-phosphate acyltransferase.